A 347-amino-acid chain; its full sequence is Dolichyl-diphosphooligosaccharide--protein glycosyltransferase subunit TUSC3 (347 aa).

The signal sequence occupies residues 1 to 41; it reads MGARGAPSRRRQAGRRPRYLPTGSFPFLLLLLLLCIQLGGG. Residues 42-196 lie on the Lumenal side of the membrane; the sequence is QKKKENLLAE…DVHIRVFRPP (155 aa). One can recognise a Thioredoxin domain in the interval 59 to 187; that stretch reads WSSRRSVFRM…LAKWIADRTD (129 aa). N83 carries N-linked (GlcNAc...) asparagine glycosylation. Cysteines 99 and 102 form a disulfide. A helical transmembrane segment spans residues 197–217; the sequence is NYSGTIALALLVSLVGGLLYL. At 218–221 the chain is on the cytoplasmic side; it reads RRNN. Residues 222 to 242 traverse the membrane as a helical segment; that stretch reads LEFIYNKTGWAMVSLCIVFAM. Over 243–276 the chain is Lumenal; that stretch reads TSGQMWNHIRGPPYAHKNPHNGQVSYIHGSSQVQ. Residues 277-297 traverse the membrane as a helical segment; the sequence is FVAESHIILVLNAAITMGMDL. The Cytoplasmic segment spans residues 298–312; it reads LNEAATSKGDVGKRR. A helical transmembrane segment spans residues 313 to 333; it reads IICLVGLGLVVFFFSFLLSIF. Residues 334–347 lie on the Lumenal side of the membrane; the sequence is RSKYHGYPYSFLIK.

It belongs to the OST3/OST6 family. In terms of assembly, accessory component of the STT3B-containing form of the oligosaccharyltransferase (OST) complex. OST exists in two different complex forms which contain common core subunits RPN1, RPN2, OST48, OST4, DAD1 and TMEM258, either STT3A or STT3B as catalytic subunits, and form-specific accessory subunits. OST can form stable complexes with the Sec61 complex or with both the Sec61 and TRAP complexes. The association of TUSC3 or MAGT1 with the STT3B-containing complex seems to be mutually exclusvice.

It localises to the endoplasmic reticulum membrane. It functions in the pathway protein modification; protein glycosylation. In terms of biological role, acts as accessory component of the N-oligosaccharyl transferase (OST) complex which catalyzes the transfer of a high mannose oligosaccharide from a lipid-linked oligosaccharide donor to an asparagine residue within an Asn-X-Ser/Thr consensus motif in nascent polypeptide chains. Involved in N-glycosylation of STT3B-dependent substrates. Specifically required for the glycosylation of a subset of acceptor sites that are near cysteine residues; in this function seems to act redundantly with MAGT1. In its oxidized form proposed to form transient mixed disulfides with a glycoprotein substrate to facilitate access of STT3B to the unmodified acceptor site. Also has oxidoreductase-independent functions in the STT3B-containing OST complex possibly involving substrate recognition. Could indirectly play a role in Mg(2+) transport. The polypeptide is Dolichyl-diphosphooligosaccharide--protein glycosyltransferase subunit TUSC3 (TUSC3) (Bos taurus (Bovine)).